Reading from the N-terminus, the 574-residue chain is DNA polymerase I (574 aa).

One can recognise a 3'-5' exonuclease domain in the interval 4-161; sequence EYVTGEEGLK…ELFPKMRDML (158 aa).

Belongs to the DNA polymerase type-A family.

It catalyses the reaction DNA(n) + a 2'-deoxyribonucleoside 5'-triphosphate = DNA(n+1) + diphosphate. This Aquifex aeolicus (strain VF5) protein is DNA polymerase I (polA).